A 317-amino-acid polypeptide reads, in one-letter code: 4-hydroxy-3-methylbut-2-enyl diphosphate reductase (317 aa).

Residue cysteine 12 participates in [4Fe-4S] cluster binding. 2 residues coordinate (2E)-4-hydroxy-3-methylbut-2-enyl diphosphate: histidine 41 and histidine 74. Dimethylallyl diphosphate-binding residues include histidine 41 and histidine 74. The isopentenyl diphosphate site is built by histidine 41 and histidine 74. Cysteine 96 serves as a coordination point for [4Fe-4S] cluster. Histidine 124 contacts (2E)-4-hydroxy-3-methylbut-2-enyl diphosphate. Histidine 124 is a binding site for dimethylallyl diphosphate. Histidine 124 is a binding site for isopentenyl diphosphate. Catalysis depends on glutamate 126, which acts as the Proton donor. (2E)-4-hydroxy-3-methylbut-2-enyl diphosphate is bound at residue threonine 168. A [4Fe-4S] cluster-binding site is contributed by cysteine 198. Serine 226, serine 227, asparagine 228, and serine 270 together coordinate (2E)-4-hydroxy-3-methylbut-2-enyl diphosphate. The dimethylallyl diphosphate site is built by serine 226, serine 227, asparagine 228, and serine 270. Residues serine 226, serine 227, asparagine 228, and serine 270 each contribute to the isopentenyl diphosphate site.

It belongs to the IspH family. [4Fe-4S] cluster is required as a cofactor.

The enzyme catalyses isopentenyl diphosphate + 2 oxidized [2Fe-2S]-[ferredoxin] + H2O = (2E)-4-hydroxy-3-methylbut-2-enyl diphosphate + 2 reduced [2Fe-2S]-[ferredoxin] + 2 H(+). The catalysed reaction is dimethylallyl diphosphate + 2 oxidized [2Fe-2S]-[ferredoxin] + H2O = (2E)-4-hydroxy-3-methylbut-2-enyl diphosphate + 2 reduced [2Fe-2S]-[ferredoxin] + 2 H(+). It participates in isoprenoid biosynthesis; dimethylallyl diphosphate biosynthesis; dimethylallyl diphosphate from (2E)-4-hydroxy-3-methylbutenyl diphosphate: step 1/1. The protein operates within isoprenoid biosynthesis; isopentenyl diphosphate biosynthesis via DXP pathway; isopentenyl diphosphate from 1-deoxy-D-xylulose 5-phosphate: step 6/6. In terms of biological role, catalyzes the conversion of 1-hydroxy-2-methyl-2-(E)-butenyl 4-diphosphate (HMBPP) into a mixture of isopentenyl diphosphate (IPP) and dimethylallyl diphosphate (DMAPP). Acts in the terminal step of the DOXP/MEP pathway for isoprenoid precursor biosynthesis. The chain is 4-hydroxy-3-methylbut-2-enyl diphosphate reductase from Chromohalobacter salexigens (strain ATCC BAA-138 / DSM 3043 / CIP 106854 / NCIMB 13768 / 1H11).